A 331-amino-acid polypeptide reads, in one-letter code: Phenylalanine--tRNA ligase alpha subunit (331 aa).

Residue Glu254 participates in Mg(2+) binding.

It belongs to the class-II aminoacyl-tRNA synthetase family. Phe-tRNA synthetase alpha subunit type 1 subfamily. Tetramer of two alpha and two beta subunits. The cofactor is Mg(2+).

The protein resides in the cytoplasm. It catalyses the reaction tRNA(Phe) + L-phenylalanine + ATP = L-phenylalanyl-tRNA(Phe) + AMP + diphosphate + H(+). This is Phenylalanine--tRNA ligase alpha subunit from Blochmanniella pennsylvanica (strain BPEN).